Consider the following 398-residue polypeptide: Phosphoglycerate kinase (398 aa).

Substrate contacts are provided by residues 21–23 (DFN), R36, 59–62 (HLGR), R119, and R157. ATP is bound by residues K208, G296, E327, and 354–357 (GGDS).

The protein belongs to the phosphoglycerate kinase family. In terms of assembly, monomer.

Its subcellular location is the cytoplasm. It carries out the reaction (2R)-3-phosphoglycerate + ATP = (2R)-3-phospho-glyceroyl phosphate + ADP. Its pathway is carbohydrate degradation; glycolysis; pyruvate from D-glyceraldehyde 3-phosphate: step 2/5. The chain is Phosphoglycerate kinase from Streptococcus pneumoniae serotype 4 (strain ATCC BAA-334 / TIGR4).